A 64-amino-acid chain; its full sequence is Large ribosomal subunit protein bL35 (64 aa).

The segment covering 1 to 14 (MKNKTHKGTAKRVK) has biased composition (basic residues). Positions 1–29 (MKNKTHKGTAKRVKVTGSGKLVREQANRR) are disordered.

The protein belongs to the bacterial ribosomal protein bL35 family.

In Corynebacterium glutamicum (strain R), this protein is Large ribosomal subunit protein bL35.